A 621-amino-acid polypeptide reads, in one-letter code: KIF-binding protein (621 aa).

The disordered stretch occupies residues 51–75; that stretch reads GPAPEDEDERPEAEDGPGAGDHALG. The span at 54-65 shows a compositional bias: acidic residues; the sequence is PEDEDERPEAED. Position 178 is a phosphoserine (Ser178).

This sequence belongs to the KIF-binding protein family. In terms of assembly, interacts with KIF1B; positively regulates KIF1B microtubule motor activity. Interacts with STMN2. In terms of tissue distribution, highly expressed in heart, brain, ovary, testis, spinal cord and all specific brain regions examined. Moderate expressed at intermediate level in all other adult tissues examined, as well as in fetal liver and brain. Not expressed in blood leukocytes.

Its subcellular location is the cytoplasm. It is found in the cytoskeleton. Its function is as follows. Activator of KIF1B plus-end-directed microtubule motor activity. Required for organization of axonal microtubules, and axonal outgrowth and maintenance during peripheral and central nervous system development. In Homo sapiens (Human), this protein is KIF-binding protein.